The sequence spans 451 residues: Crh-like protein 2 (451 aa).

The first 21 residues, 1 to 21, serve as a signal peptide directing secretion; it reads MQFNSLVLLAGATILSPFVQA. A GH16 domain is found at 22–241; it reads QTWTTCNPLN…FTKVPFTMYV (220 aa). A disulfide bond links C27 and C34. N-linked (GlcNAc...) asparagine glycans are attached at residues N31, N43, N49, and N59. The active-site Nucleophile is E121. The Proton donor role is filled by E125. Residue E125 coordinates chitin. Residues N130, N143, and N165 are each glycosylated (N-linked (GlcNAc...) asparagine). The chitin site is built by R206, W210, and T222. N273 carries an N-linked (GlcNAc...) asparagine glycan. Residues 305–325 form a helical membrane-spanning segment; the sequence is VYCGGGAAVAALVSAFLFTFL. An N-linked (GlcNAc...) asparagine glycan is attached at N366.

Belongs to the glycosyl hydrolase 16 family. CRH1 subfamily. As to quaternary structure, forms homodimers as well as heterodimers with other crh protein members crh1 and crh3. Dimerization may be necessary for the transglycosylation activity.

It localises to the membrane. It catalyses the reaction Random endo-hydrolysis of N-acetyl-beta-D-glucosaminide (1-&gt;4)-beta-linkages in chitin and chitodextrins.. Its function is as follows. Dual chitinase/transglycosylase that plays a role in cell wall architecture. Chitinase and transglycosylase activities are coupled. Required for the polysaccharide cross-linking at the septa and the cell wall. More specifically, transfers chitin to 1,6-beta-glucan in the cell wall. This is Crh-like protein 2 from Botryotinia fuckeliana (strain B05.10) (Noble rot fungus).